The chain runs to 116 residues: Protein Rev (116 aa).

Residues Ser5 and Ser8 each carry the phosphoserine; by host CK2 modification. Positions 18–26 are homomultimerization; sequence LIKILYQSN. The interval 26–50 is disordered; sequence NPYPKPNGSRQARRNRRRRWRARQN. Residues 34–50 carry the Nuclear localization signal and RNA-binding (RRE) motif; the sequence is SRQARRNRRRRWRARQN. Residues 36–47 are compositionally biased toward basic residues; sequence QARRNRRRRWRA. The short motif at 73–84 is the Nuclear export signal and binding to XPO1 element; sequence LQLPPIERLRLD. The segment at 91–116 is disordered; that stretch reads NSGTQGVGDPQISGEPCMVLGAGTKE. A Phosphoserine; by host modification is found at Ser92.

It belongs to the HIV-1 REV protein family. In terms of assembly, homomultimer; when bound to the RRE. Multimeric assembly is essential for activity and may involve XPO1. Binds to human KPNB1, XPO1, TNPO1, RANBP5 and IPO7. Interacts with the viral Integrase. Interacts with human KHDRBS1. Interacts with human NAP1; this interaction decreases Rev multimerization and stimulates its activity. Interacts with human DEAD-box helicases DDX3 and DDX24; these interactions may serve for viral RNA export to the cytoplasm and packaging, respectively. Interacts with human PSIP1; this interaction may inhibit HIV-1 DNA integration by promoting dissociation of the Integrase-LEDGF/p75 complex. Post-translationally, asymmetrically arginine dimethylated at one site by host PRMT6. Methylation impairs the RNA-binding activity and export of viral RNA from the nucleus to the cytoplasm. Phosphorylated by protein kinase CK2. Presence of, and maybe binding to the N-terminus of the regulatory beta subunit of CK2 is necessary for CK2-mediated Rev's phosphorylation.

Its subcellular location is the host nucleus. The protein resides in the host nucleolus. It localises to the host cytoplasm. Escorts unspliced or incompletely spliced viral pre-mRNAs (late transcripts) out of the nucleus of infected cells. These pre-mRNAs carry a recognition sequence called Rev responsive element (RRE) located in the env gene, that is not present in fully spliced viral mRNAs (early transcripts). This function is essential since most viral proteins are translated from unspliced or partially spliced pre-mRNAs which cannot exit the nucleus by the pathway used by fully processed cellular mRNAs. Rev itself is translated from a fully spliced mRNA that readily exits the nucleus. Rev's nuclear localization signal (NLS) binds directly to KPNB1/Importin beta-1 without previous binding to KPNA1/Importin alpha-1. KPNB1 binds to the GDP bound form of RAN (Ran-GDP) and targets Rev to the nucleus. In the nucleus, the conversion from Ran-GDP to Ran-GTP dissociates Rev from KPNB1 and allows Rev's binding to the RRE in viral pre-mRNAs. Rev multimerization on the RRE via cooperative assembly exposes its nuclear export signal (NES) to the surface. Rev can then form a complex with XPO1/CRM1 and Ran-GTP, leading to nuclear export of the complex. Conversion from Ran-GTP to Ran-GDP mediates dissociation of the Rev/RRE/XPO1/RAN complex, so that Rev can return to the nucleus for a subsequent round of export. Beside KPNB1, also seems to interact with TNPO1/Transportin-1, RANBP5/IPO5 and IPO7/RANBP7 for nuclear import. The nucleoporin-like HRB/RIP is an essential cofactor that probably indirectly interacts with Rev to release HIV RNAs from the perinuclear region to the cytoplasm. This is Protein Rev from Homo sapiens (Human).